We begin with the raw amino-acid sequence, 597 residues long: Elongation factor 4 (597 aa).

The tr-type G domain maps to 2–184 (KNIRNFSIIA…TIVAKVPAPE (183 aa)). GTP-binding positions include 14-19 (DHGKST) and 131-134 (NKID).

It belongs to the TRAFAC class translation factor GTPase superfamily. Classic translation factor GTPase family. LepA subfamily.

It is found in the cell inner membrane. The catalysed reaction is GTP + H2O = GDP + phosphate + H(+). Its function is as follows. Required for accurate and efficient protein synthesis under certain stress conditions. May act as a fidelity factor of the translation reaction, by catalyzing a one-codon backward translocation of tRNAs on improperly translocated ribosomes. Back-translocation proceeds from a post-translocation (POST) complex to a pre-translocation (PRE) complex, thus giving elongation factor G a second chance to translocate the tRNAs correctly. Binds to ribosomes in a GTP-dependent manner. The chain is Elongation factor 4 from Francisella tularensis subsp. mediasiatica (strain FSC147).